The following is a 73-amino-acid chain: N-terminal-borealin-like protein (73 aa).

The protein belongs to the borealin family. In terms of assembly, component of the aurora kinase complex composed of at least BIR1, BNL1, IPL1 and SLI15.

The protein resides in the nucleus. It is found in the cytoplasm. Its subcellular location is the cytoskeleton. The protein localises to the spindle. Component of the aurora kinase complex, also called chromosomal passenger complex (CPC), essential for chromosome segregation and metaphase chromosome alignment. Mediates the SLI15-BIR1 interaction within the CPC. The polypeptide is N-terminal-borealin-like protein (NBL1) (Saccharomyces cerevisiae (strain ATCC 204508 / S288c) (Baker's yeast)).